A 217-amino-acid polypeptide reads, in one-letter code: NADPH-dependent 3-demethoxyubiquinone 3-hydroxylase, mitochondrial (217 aa).

The transit peptide at 1–35 directs the protein to the mitochondrion; the sequence is MSCAGAAAAPRLWRLRPGARRSLSAYGRRTSVRFR. Positions 11-29 are required for nuclear localization; the sequence is RLWRLRPGARRSLSAYGRR. Repeat copies occupy residues 48-129 and 130-217. Residues 48–217 are 2 X approximate tandem repeats; it reads AVDRIIRVDH…RVAIYLSERL (170 aa). R51 provides a ligand contact to NADH. The Fe cation site is built by E60, E90, H93, E142, E178, and H181. NADH is bound by residues Y212 and R216.

It belongs to the COQ7 family. In terms of assembly, component of a multi-subunit COQ enzyme complex. Interacts with COQ8B and COQ6. Interacts with COQ9. Fe cation serves as cofactor. Expressed dominantly in heart and skeletal muscle.

It localises to the mitochondrion inner membrane. Its subcellular location is the mitochondrion. The protein localises to the nucleus. It is found in the chromosome. The enzyme catalyses a 5-methoxy-2-methyl-3-(all-trans-polyprenyl)benzoquinone + NADH + O2 = a 3-demethylubiquinone + NAD(+) + H2O. The protein operates within cofactor biosynthesis; ubiquinone biosynthesis. Catalyzes the hydroxylation of the 5-methoxy-2-methyl-3-(all-trans-polyprenyl)benzoquinone at the C6 position and participates in the biosynthesis of ubiquinone. Catalyzes the reaction through a substrate-mediated reduction pathway, whereby NADH shuttles electrons to 5-methoxy-2-methyl-3-(all-trans-decaprenyl)benzoquinone, which then transfers the electrons to the two Fe(3+) centers. The binding of 5-methoxy-2-methyl-3-(all-trans-polyprenyl)benzoquinone (DMQn) mediates reduction of the diiron center by nicotinamide adenine dinucleotide (NADH) and initiates oxygen activation for subsequent DMQ hydroxylation. The physiological substrates are 5-methoxy-2-methyl-3-(all-trans-nonaprenyl)benzoquinone (DMQ(9)) and 5-methoxy-2-methyl-3-(all-trans-decaprenyl)benzoquinone (DMQ(10)), however in vitro the enzyme does not have any specificity concerning the length of the polyprenyl tail, and accepts tails of various lengths with similar efficiency. Also has a structural role in the COQ enzyme complex, stabilizing other COQ polypeptides. Involved in lifespan determination in a ubiquinone-independent manner. Plays a role in modulating mitochondrial stress responses, acting in the nucleus, perhaps via regulating gene expression, independent of its characterized mitochondrial function in ubiquinone biosynthesis. This chain is NADPH-dependent 3-demethoxyubiquinone 3-hydroxylase, mitochondrial, found in Homo sapiens (Human).